The sequence spans 147 residues: Protein phosphatase 1 regulatory subunit 14B (147 aa).

The segment covering 1–15 (MADSGPAGGAALAAP) has biased composition (low complexity). The interval 1–55 (MADSGPAGGAALAAPAPGPGSGSTGPRVYFQSPPGAAGEGPGGADDDGPVRRQGK) is disordered. Residue A2 is modified to N-acetylalanine. A Phosphoserine modification is found at S21. Position 29 is a phosphotyrosine (Y29). S32 carries the phosphoserine modification. T57 bears the Phosphothreonine mark. A coiled-coil region spans residues 61–103 (DRKELRKRLNLEEWILEQLTRLYDCQEEEIPELEIDVDELLDM).

The protein belongs to the PP1 inhibitor family. Phosphorylated primarily on Thr-57 by PKC (in vitro). An unknown Ser is also phosphorylated by PKC (in vitro). Ubiquitous. Highly expressed in testis. Detected at low levels in the other tissues tested. Highly expressed in cardiac muscle, bladder and aorta (at protein level).

It is found in the cytoplasm. Functionally, inhibitor of PPP1CA. Has over 50-fold higher inhibitory activity when phosphorylated. In Mus musculus (Mouse), this protein is Protein phosphatase 1 regulatory subunit 14B (Ppp1r14b).